We begin with the raw amino-acid sequence, 3933 residues long: Circularly permutated Ras protein 2 (3933 aa).

Residues 12 to 46 (VHEVKKQELESILLQQEQEKQAKEEKESIKDTDDK) are a coiled coil. 4 disordered regions span residues 23–101 (ILLQ…IEKK), 136–189 (DIRE…RKET), 1022–1054 (ITTT…TTTT), and 2817–2839 (NNNN…RPTR). A compositionally biased stretch (basic and acidic residues) spans 28-62 (EQEKQAKEEKESIKDTDDKPIEDTEHSTNNDKPIE). Positions 70–92 (TPTTTTTTKPTDEASSSSNNNNN) are enriched in low complexity. Over residues 136–145 (DIREPTDKPF) the composition is skewed to basic and acidic residues. Positions 146 to 156 (ENTSNIETTRQ) are enriched in polar residues. Residues 167–215 (KTEAERLEQEQKQKQYDENRKETDRKLELELERLKNKKEEVEQIRAYFQ) are a coiled coil. Basic and acidic residues predominate over residues 168–189 (TEAERLEQEQKQKQYDENRKET). Positions 2817–2826 (NNNNNNNRYN) are enriched in low complexity. Residues 2853 to 2857 (DTAGQ), 2913 to 2916 (TKAD), and 2976 to 2983 (GDGGIGKS) each bind GTP. Disordered stretches follow at residues 3036–3086 (LQSA…LSSR), 3107–3142 (RKSS…QDYE), and 3733–3754 (VIEP…PSSS). A compositionally biased stretch (low complexity) spans 3070-3086 (PSSSSTRTSVSTSLSSR). A compositionally biased stretch (basic and acidic residues) spans 3107–3120 (RKSSLVEEESKRQY). The span at 3121–3141 (DDDDESKSESSEYDDDDDQDY) shows a compositional bias: acidic residues.

It belongs to the small GTPase superfamily. CpRas family.

This is Circularly permutated Ras protein 2 (cpras2) from Dictyostelium discoideum (Social amoeba).